The following is a 263-amino-acid chain: CRISPR-associated protein Cas5 2 (263 aa).

The protein belongs to the CRISPR-associated protein Cas5 family. Subtype I-A/Apern subfamily. In terms of assembly, part of the aCascade ribonucleoprotein complex, minimally composed of Csa2 and Cas5a, which binds crRNA. Other possible components of aCascade in strain P1 are Cas6b (SSO1437) and Csa5 (SSO1443), while SSO1399, Cas5b (SSO1400) and SSO1401 have sometimes been seen weakly associated. Csa2 is probably the major RNA-binding subunit. The Csa2-Cas5a-crRNA complex also binds target DNA homologous to crRNA, probably forming an R-loop. Purified aCascade forms a filament about 6 nm in width.

CRISPR (clustered regularly interspaced short palindromic repeat) is an adaptive immune system that provides protection against mobile genetic elements (viruses, transposable elements and conjugative plasmids). CRISPR clusters contain spacers, sequences complementary to antecedent mobile elements, and target invading nucleic acids. CRISPR clusters are transcribed and processed into CRISPR RNA (crRNA). The chain is CRISPR-associated protein Cas5 2 (cas5b) from Saccharolobus solfataricus (strain ATCC 35092 / DSM 1617 / JCM 11322 / P2) (Sulfolobus solfataricus).